The sequence spans 283 residues: ACT domain-containing protein DS12, chloroplastic (283 aa).

The transit peptide at 1-56 (MAEMAVTAALRPCSGVSPAVSGTSHRRRRPAAWRALAPPPPHAGLRLSSPAVRVPR) directs the protein to the chloroplast. Residues 14 to 78 (SGVSPAVSGT…SNTDTVPTPK (65 aa)) form a disordered region. Residues 48–63 (SSPAVRVPRAASSAAV) are compositionally biased toward low complexity. 2 ACT domains span residues 91–171 (IVEI…ASSQ) and 206–276 (LLVV…LRRP).

It is found in the plastid. It localises to the chloroplast. The protein is ACT domain-containing protein DS12, chloroplastic of Oryza sativa subsp. indica (Rice).